We begin with the raw amino-acid sequence, 99 residues long: DNA/RNA-binding protein Alba 1 (99 aa).

Lys17 is modified (N6-acetyllysine).

The protein belongs to the histone-like Alba family. In terms of processing, acetylated. Acetylation at Lys-17 decreases DNA-binding affinity.

It localises to the cytoplasm. The protein localises to the chromosome. Its function is as follows. Binds double-stranded DNA tightly but without sequence specificity. Involved in DNA compaction. This is DNA/RNA-binding protein Alba 1 from Sulfurisphaera tokodaii (strain DSM 16993 / JCM 10545 / NBRC 100140 / 7) (Sulfolobus tokodaii).